Consider the following 152-residue polypeptide: MFAVVRMRGTVDVHRKIKETLKMLRLHKRYHCVVIPDTPSYRGMLQVVKDYVAYGEINAETLALLLRLRGRLTGNRKLTDEYVKEKTGYETIEEFAKAVVEGKASLKDLPDLKPVFRLHPPRKGIKNIKWHYPRGNLGYHGEEINRLLYKMR.

Belongs to the universal ribosomal protein uL30 family. Part of the 50S ribosomal subunit.

This chain is Large ribosomal subunit protein uL30, found in Archaeoglobus fulgidus (strain ATCC 49558 / DSM 4304 / JCM 9628 / NBRC 100126 / VC-16).